Here is a 276-residue protein sequence, read N- to C-terminus: Large ribosomal subunit protein uL2 (276 aa).

The disordered stretch occupies residues asparagine 212 to lysine 276. Over residues tyrosine 257–lysine 276 the composition is skewed to basic residues.

Belongs to the universal ribosomal protein uL2 family. As to quaternary structure, part of the 50S ribosomal subunit. Forms a bridge to the 30S subunit in the 70S ribosome.

In terms of biological role, one of the primary rRNA binding proteins. Required for association of the 30S and 50S subunits to form the 70S ribosome, for tRNA binding and peptide bond formation. It has been suggested to have peptidyltransferase activity; this is somewhat controversial. Makes several contacts with the 16S rRNA in the 70S ribosome. In Helicobacter pylori (strain P12), this protein is Large ribosomal subunit protein uL2.